Consider the following 153-residue polypeptide: MKLLKKGTTVLFVMIMAVMLVACGDKEESKTFSLSQNGVDSKLTYTYKGDKVTKQTAENTMLYTSMGIKTKEEAEKMLKETSEKFQNIEGLKESIEYKDDKAIETLEVDYTKISSEDLKKLPGMASTGDVSKGISMKESEKMLKSQGFKEVEK.

The signal sequence occupies residues 1 to 22; the sequence is MKLLKKGTTVLFVMIMAVMLVA. Residue Cys-23 is the site of N-palmitoyl cysteine attachment. Cys-23 carries S-diacylglycerol cysteine lipidation. The tract at residues 121–153 is disordered; that stretch reads LPGMASTGDVSKGISMKESEKMLKSQGFKEVEK. Over residues 135-153 the composition is skewed to basic and acidic residues; sequence SMKESEKMLKSQGFKEVEK.

The protein to E.coli YehR.

It is found in the cell membrane. This is an uncharacterized protein from Listeria innocua serovar 6a (strain ATCC BAA-680 / CLIP 11262).